The following is a 177-amino-acid chain: Translation initiation factor IF-3 (177 aa).

This sequence belongs to the IF-3 family. Monomer.

The protein localises to the cytoplasm. In terms of biological role, IF-3 binds to the 30S ribosomal subunit and shifts the equilibrium between 70S ribosomes and their 50S and 30S subunits in favor of the free subunits, thus enhancing the availability of 30S subunits on which protein synthesis initiation begins. This chain is Translation initiation factor IF-3, found in Nitratiruptor sp. (strain SB155-2).